The chain runs to 426 residues: Histidinol dehydrogenase (426 aa).

NAD(+) is bound by residues tyrosine 123, glutamine 185, and asparagine 208. Residues serine 231, glutamine 253, and histidine 256 each contribute to the substrate site. The Zn(2+) site is built by glutamine 253 and histidine 256. Catalysis depends on proton acceptor residues glutamate 321 and histidine 322. 4 residues coordinate substrate: histidine 322, aspartate 355, glutamate 409, and histidine 414. Aspartate 355 is a binding site for Zn(2+). Position 414 (histidine 414) interacts with Zn(2+).

Belongs to the histidinol dehydrogenase family. Zn(2+) serves as cofactor.

The enzyme catalyses L-histidinol + 2 NAD(+) + H2O = L-histidine + 2 NADH + 3 H(+). The protein operates within amino-acid biosynthesis; L-histidine biosynthesis; L-histidine from 5-phospho-alpha-D-ribose 1-diphosphate: step 9/9. Functionally, catalyzes the sequential NAD-dependent oxidations of L-histidinol to L-histidinaldehyde and then to L-histidine. The protein is Histidinol dehydrogenase of Bacillus licheniformis (strain ATCC 14580 / DSM 13 / JCM 2505 / CCUG 7422 / NBRC 12200 / NCIMB 9375 / NCTC 10341 / NRRL NRS-1264 / Gibson 46).